The sequence spans 83 residues: Small ribosomal subunit protein uS17 (83 aa).

This sequence belongs to the universal ribosomal protein uS17 family. In terms of assembly, part of the 30S ribosomal subunit.

One of the primary rRNA binding proteins, it binds specifically to the 5'-end of 16S ribosomal RNA. In Pseudoalteromonas atlantica (strain T6c / ATCC BAA-1087), this protein is Small ribosomal subunit protein uS17.